Consider the following 440-residue polypeptide: uncharacterized protein (440 aa).

12 helical membrane-spanning segments follow: residues 24 to 44, 47 to 67, 93 to 113, 117 to 137, 155 to 175, 183 to 203, 229 to 249, 276 to 296, 323 to 343, 346 to 366, 379 to 399, and 400 to 420; these read VVIG…APAA, AGSG…CNAI, FWGY…CAAM, VGFY…VVAL, IVAV…GSGA, IGVD…FFAF, LALG…IAVL, VVQI…ILGV, PFRA…TADI, AIGF…ASAL, IPLV…LSSV, and AAGA…RIIT.

It belongs to the amino acid-polyamine-organocation (APC) superfamily.

It localises to the cell membrane. In terms of biological role, probable amino-acid or metabolite transport protein. This is an uncharacterized protein from Mycobacterium bovis (strain ATCC BAA-935 / AF2122/97).